The chain runs to 947 residues: Plasma membrane ATPase 2 (947 aa).

Positions 1–103 (MSSTEAKQYK…TDGVHAGQRV (103 aa)) are disordered. At 1 to 144 (MSSTEAKQYK…AEENESLIVK (144 aa)) the chain is on the cytoplasmic side. Basic and acidic residues predominate over residues 7–22 (KQYKEKPSKEYLHASD). Residues 26–61 (PANNSAASSSSSSSTSTSASSSAAAVPRKAAAASAA) are compositionally biased toward low complexity. The span at 62-74 (DDSDSDEDIDQLI) shows a compositional bias: acidic residues. Residues 145–165 (FLMFFVGPIQFVMEAAAILAA) traverse the membrane as a helical segment. Residues 166-169 (GLSD) lie on the Extracellular side of the membrane. Residues 170–189 (WVDVGVICALLLLNASVGFI) form a helical membrane-spanning segment. Over 190-320 (QEFQAGSIVD…VEGHFTEVLN (131 aa)) the chain is Cytoplasmic. A helical membrane pass occupies residues 321–342 (GIGIILLVLVIATLLLVWTACF). Topologically, residues 343–353 (YRTVGIVSILR) are extracellular. Residues 354 to 376 (YTLGITIIGVPVGLPAVVTTTMA) form a helical membrane-spanning segment. At 377 to 748 (VGAAYLAKKQ…IAILNNSLDI (372 aa)) the chain is on the cytoplasmic side. Asp-407 serves as the catalytic 4-aspartylphosphate intermediate. Mg(2+) is bound by residues Asp-663 and Asp-667. A helical membrane pass occupies residues 749–767 (NLIVFIAIFADVATLTIAY). Over 768-783 (DNAPYAPEPVKWNLPR) the chain is Extracellular. A helical membrane pass occupies residues 784–803 (LWGMSIILGIVLAIGSWITL). Residues 804 to 853 (TTMFLPNGGIIQNFGAMNGVMFLQISLTENWLIFVTRAAGPFWSSIPSWQ) lie on the Cytoplasmic side of the membrane. A helical transmembrane segment spans residues 854 to 874 (LAGAVFAVDIIATMFTLFGWW). Residues 875 to 886 (SENWTDIVSVVR) are Extracellular-facing. A helical membrane pass occupies residues 887–903 (VWIWSIGIFCVLGGFYY). Residues 904–947 (IMSTSQAFDRLMNGKSLKEKKSTRSVEDFMAAMQRVSTQHEKSS) lie on the Cytoplasmic side of the membrane.

The protein belongs to the cation transport ATPase (P-type) (TC 3.A.3) family. Type IIIA subfamily.

Its subcellular location is the cell membrane. It carries out the reaction ATP + H2O + H(+)(in) = ADP + phosphate + 2 H(+)(out). Functionally, the plasma membrane ATPase of plants and fungi is a hydrogen ion pump. The proton gradient it generates drives the active transport of nutrients by H(+)-symport. The resulting external acidification and/or internal alkinization may mediate growth responses. The polypeptide is Plasma membrane ATPase 2 (PMA2) (Saccharomyces cerevisiae (strain ATCC 204508 / S288c) (Baker's yeast)).